We begin with the raw amino-acid sequence, 63 residues long: MPKMKTHRGSAKRFRRTGTGKLRRFKAYASHLTGKKSAKRIRNLRKGTTVSEADMKRIDKMIP.

The protein belongs to the bacterial ribosomal protein bL35 family.

The protein is Large ribosomal subunit protein bL35 of Finegoldia magna (strain ATCC 29328 / DSM 20472 / WAL 2508) (Peptostreptococcus magnus).